The chain runs to 429 residues: Adenylosuccinate synthetase (429 aa).

Residues 12-18 and 40-42 each bind GTP; these read GDEGKGK and GHT. Asp13 acts as the Proton acceptor in catalysis. 2 residues coordinate Mg(2+): Asp13 and Gly40. Residues 13–16, 38–41, Thr128, Arg142, Gln223, Thr238, and Arg302 contribute to the IMP site; these read DEGK and NAGH. The active-site Proton donor is the His41. 298–304 provides a ligand contact to substrate; it reads TVTGRPR. Residues Arg304, 330–332, and 412–414 each bind GTP; these read LLD and SVG.

This sequence belongs to the adenylosuccinate synthetase family. As to quaternary structure, homodimer. It depends on Mg(2+) as a cofactor.

It localises to the cytoplasm. It catalyses the reaction IMP + L-aspartate + GTP = N(6)-(1,2-dicarboxyethyl)-AMP + GDP + phosphate + 2 H(+). The protein operates within purine metabolism; AMP biosynthesis via de novo pathway; AMP from IMP: step 1/2. In terms of biological role, plays an important role in the de novo pathway of purine nucleotide biosynthesis. Catalyzes the first committed step in the biosynthesis of AMP from IMP. The polypeptide is Adenylosuccinate synthetase (Limosilactobacillus fermentum (strain NBRC 3956 / LMG 18251) (Lactobacillus fermentum)).